The chain runs to 447 residues: D-ribitol-5-phosphate cytidylyltransferase (447 aa).

This sequence belongs to the IspD/TarI cytidylyltransferase family. IspD subfamily. Homodimer.

It is found in the cytoplasm. Its subcellular location is the cytosol. The catalysed reaction is D-ribitol 5-phosphate + CTP + H(+) = CDP-L-ribitol + diphosphate. It carries out the reaction D-ribose 5-phosphate + CTP + H(+) = CDP-D-ribose + diphosphate. It catalyses the reaction D-ribulose 5-phosphate + CTP + H(+) = CDP-D-ribulose + diphosphate. It functions in the pathway protein modification; protein glycosylation. Its function is as follows. Cytidylyltransferase required for protein O-linked mannosylation. Catalyzes the formation of CDP-ribitol nucleotide sugar from D-ribitol 5-phosphate. CDP-ribitol is a substrate of FKTN during the biosynthesis of the phosphorylated O-mannosyl trisaccharide (N-acetylgalactosamine-beta-3-N-acetylglucosamine-beta-4-(phosphate-6-)mannose), a carbohydrate structure present in alpha-dystroglycan (DAG1), which is required for binding laminin G-like domain-containing extracellular proteins with high affinity. Shows activity toward other pentose phosphate sugars and mediates formation of CDP-ribulose or CDP-ribose using CTP and ribulose-5-phosphate or ribose-5-phosphate, respectively. Not involved in dolichol production. This chain is D-ribitol-5-phosphate cytidylyltransferase (Crppa), found in Mus musculus (Mouse).